The primary structure comprises 444 residues: Probable ribonuclease FAU-1 (444 aa).

Belongs to the FAU-1 family.

In terms of biological role, probable RNase involved in rRNA stability through maturation and/or degradation of precursor rRNAs. Binds to RNA in loop regions with AU-rich sequences. In Pyrobaculum arsenaticum (strain DSM 13514 / JCM 11321 / PZ6), this protein is Probable ribonuclease FAU-1.